The primary structure comprises 100 residues: Aspartyl/glutamyl-tRNA(Asn/Gln) amidotransferase subunit C (100 aa).

This sequence belongs to the GatC family. In terms of assembly, heterotrimer of A, B and C subunits.

The enzyme catalyses L-glutamyl-tRNA(Gln) + L-glutamine + ATP + H2O = L-glutaminyl-tRNA(Gln) + L-glutamate + ADP + phosphate + H(+). It catalyses the reaction L-aspartyl-tRNA(Asn) + L-glutamine + ATP + H2O = L-asparaginyl-tRNA(Asn) + L-glutamate + ADP + phosphate + 2 H(+). Functionally, allows the formation of correctly charged Asn-tRNA(Asn) or Gln-tRNA(Gln) through the transamidation of misacylated Asp-tRNA(Asn) or Glu-tRNA(Gln) in organisms which lack either or both of asparaginyl-tRNA or glutaminyl-tRNA synthetases. The reaction takes place in the presence of glutamine and ATP through an activated phospho-Asp-tRNA(Asn) or phospho-Glu-tRNA(Gln). This is Aspartyl/glutamyl-tRNA(Asn/Gln) amidotransferase subunit C from Streptococcus thermophilus (strain ATCC BAA-491 / LMD-9).